Here is a 164-residue protein sequence, read N- to C-terminus: Crossover junction endodeoxyribonuclease RuvC (164 aa).

Catalysis depends on residues D7, E66, and D138. D7, E66, and D138 together coordinate Mg(2+).

Belongs to the RuvC family. In terms of assembly, homodimer which binds Holliday junction (HJ) DNA. The HJ becomes 2-fold symmetrical on binding to RuvC with unstacked arms; it has a different conformation from HJ DNA in complex with RuvA. In the full resolvosome a probable DNA-RuvA(4)-RuvB(12)-RuvC(2) complex forms which resolves the HJ. Mg(2+) serves as cofactor.

Its subcellular location is the cytoplasm. It carries out the reaction Endonucleolytic cleavage at a junction such as a reciprocal single-stranded crossover between two homologous DNA duplexes (Holliday junction).. The RuvA-RuvB-RuvC complex processes Holliday junction (HJ) DNA during genetic recombination and DNA repair. Endonuclease that resolves HJ intermediates. Cleaves cruciform DNA by making single-stranded nicks across the HJ at symmetrical positions within the homologous arms, yielding a 5'-phosphate and a 3'-hydroxyl group; requires a central core of homology in the junction. The consensus cleavage sequence is 5'-(A/T)TT(C/G)-3'. Cleavage occurs on the 3'-side of the TT dinucleotide at the point of strand exchange. HJ branch migration catalyzed by RuvA-RuvB allows RuvC to scan DNA until it finds its consensus sequence, where it cleaves and resolves the cruciform DNA. In Paracoccus denitrificans (strain Pd 1222), this protein is Crossover junction endodeoxyribonuclease RuvC.